The chain runs to 286 residues: Putative sugar uptake protein lmo0176 (286 aa).

8 consecutive transmembrane segments (helical) span residues 4 to 26, 33 to 55, 114 to 136, 149 to 167, 177 to 194, 207 to 226, 230 to 252, and 264 to 283; these read MIAL…FGGS, GMTL…VYTL, LRII…TSYA, GLIT…VVLI, AILP…IMTH, LLLT…MVHA, VGVA…GGII, and LFVI…IGVA.

The protein belongs to the GRP transporter (TC 2.A.7.5) family.

Its subcellular location is the cell membrane. This is Putative sugar uptake protein lmo0176 from Listeria monocytogenes serovar 1/2a (strain ATCC BAA-679 / EGD-e).